The sequence spans 184 residues: Jacalin-related lectin 2 (184 aa).

The Jacalin-type lectin domain maps to 4 to 163; it reads KIKIGPVGTD…LQNIGVYLQP (160 aa).

Belongs to the jacalin lectin family.

This chain is Jacalin-related lectin 2 (JAL2), found in Arabidopsis thaliana (Mouse-ear cress).